The following is a 1083-amino-acid chain: Integrator complex subunit 3 homolog (1083 aa).

Disordered regions lie at residues 551–579 (NEAV…DLPL), 929–953 (YPSS…TPSA), and 1014–1083 (AVGR…NDSD). The segment covering 942 to 953 (KGSSAASSTPSA) has biased composition (low complexity). A phosphoserine mark is found at Ser1053, Ser1054, Ser1058, and Ser1059. The segment covering 1066–1077 (HKVTQPAKKRKK) has biased composition (basic residues).

The protein belongs to the Integrator subunit 3 family. As to quaternary structure, belongs to the multiprotein complex Integrator, at least composed of IntS1, IntS2, IntS3, IntS4, omd/IntS5, IntS6, defl/IntS7, IntS8, IntS9, IntS10, IntS11, IntS12, asun/IntS13, IntS14 and IntS15. The core complex associates with protein phosphatase 2A subunits mts/PP2A and Pp2A-29B, to form the Integrator-PP2A (INTAC) complex.

It localises to the nucleus. Its subcellular location is the cytoplasm. In terms of biological role, component of the integrator complex, a multiprotein complex that terminates RNA polymerase II (Pol II) transcription in the promoter-proximal region of genes. The integrator complex provides a quality checkpoint during transcription elongation by driving premature transcription termination of transcripts that are unfavorably configured for transcriptional elongation: the complex terminates transcription by (1) catalyzing dephosphorylation of the C-terminal domain (CTD) of Pol II subunit Polr2A/Rbp1 and Spt5, and (2) degrading the exiting nascent RNA transcript via endonuclease activity. The integrator complex is also involved in the 3'-end processing of the U7 snRNA, and also the spliceosomal snRNAs U1, U2, U4 and U5. The protein is Integrator complex subunit 3 homolog (IntS3) of Drosophila grimshawi (Hawaiian fruit fly).